A 320-amino-acid chain; its full sequence is Lipoyl synthase (320 aa).

The disordered stretch occupies residues 1–29 (MVTVVDRVTNRRLRHPEKAHRPDTSVQKK). Residues 19 to 29 (AHRPDTSVQKK) show a composition bias toward basic and acidic residues. Residues C59, C64, C70, C85, C89, C92, and S298 each contribute to the [4Fe-4S] cluster site. One can recognise a Radical SAM core domain in the interval 71 to 287 (WSQRHASFMI…AKIGKVKGFL (217 aa)).

Belongs to the radical SAM superfamily. Lipoyl synthase family. The cofactor is [4Fe-4S] cluster.

The protein resides in the cytoplasm. The enzyme catalyses [[Fe-S] cluster scaffold protein carrying a second [4Fe-4S](2+) cluster] + N(6)-octanoyl-L-lysyl-[protein] + 2 oxidized [2Fe-2S]-[ferredoxin] + 2 S-adenosyl-L-methionine + 4 H(+) = [[Fe-S] cluster scaffold protein] + N(6)-[(R)-dihydrolipoyl]-L-lysyl-[protein] + 4 Fe(3+) + 2 hydrogen sulfide + 2 5'-deoxyadenosine + 2 L-methionine + 2 reduced [2Fe-2S]-[ferredoxin]. It functions in the pathway protein modification; protein lipoylation via endogenous pathway; protein N(6)-(lipoyl)lysine from octanoyl-[acyl-carrier-protein]: step 2/2. In terms of biological role, catalyzes the radical-mediated insertion of two sulfur atoms into the C-6 and C-8 positions of the octanoyl moiety bound to the lipoyl domains of lipoate-dependent enzymes, thereby converting the octanoylated domains into lipoylated derivatives. The chain is Lipoyl synthase from Bartonella tribocorum (strain CIP 105476 / IBS 506).